Here is a 626-residue protein sequence, read N- to C-terminus: UvrABC system protein C (626 aa).

Positions 25-104 (TSPGVYRFSN…IKELKPRYNV (80 aa)) constitute a GIY-YIG domain. Residues 218-253 (SALLRDLSAEMQKKAKELKFEEAAALKAQIEGLKRY) enclose the UVR domain.

This sequence belongs to the UvrC family. As to quaternary structure, interacts with UvrB in an incision complex.

It is found in the cytoplasm. In terms of biological role, the UvrABC repair system catalyzes the recognition and processing of DNA lesions. UvrC both incises the 5' and 3' sides of the lesion. The N-terminal half is responsible for the 3' incision and the C-terminal half is responsible for the 5' incision. The chain is UvrABC system protein C from Chlorobaculum tepidum (strain ATCC 49652 / DSM 12025 / NBRC 103806 / TLS) (Chlorobium tepidum).